Consider the following 224-residue polypeptide: Phosphoribosylformylglycinamidine synthase subunit PurQ (224 aa).

The region spanning 2 to 224 (KIAVIVFPGS…SLLEEGKVKG (223 aa)) is the Glutamine amidotransferase type-1 domain. Residue Cys-86 is the Nucleophile of the active site. Residues His-195 and Glu-197 contribute to the active site.

As to quaternary structure, part of the FGAM synthase complex composed of 1 PurL, 1 PurQ and 2 PurS subunits.

The protein localises to the cytoplasm. It catalyses the reaction N(2)-formyl-N(1)-(5-phospho-beta-D-ribosyl)glycinamide + L-glutamine + ATP + H2O = 2-formamido-N(1)-(5-O-phospho-beta-D-ribosyl)acetamidine + L-glutamate + ADP + phosphate + H(+). It carries out the reaction L-glutamine + H2O = L-glutamate + NH4(+). The protein operates within purine metabolism; IMP biosynthesis via de novo pathway; 5-amino-1-(5-phospho-D-ribosyl)imidazole from N(2)-formyl-N(1)-(5-phospho-D-ribosyl)glycinamide: step 1/2. Its function is as follows. Part of the phosphoribosylformylglycinamidine synthase complex involved in the purines biosynthetic pathway. Catalyzes the ATP-dependent conversion of formylglycinamide ribonucleotide (FGAR) and glutamine to yield formylglycinamidine ribonucleotide (FGAM) and glutamate. The FGAM synthase complex is composed of three subunits. PurQ produces an ammonia molecule by converting glutamine to glutamate. PurL transfers the ammonia molecule to FGAR to form FGAM in an ATP-dependent manner. PurS interacts with PurQ and PurL and is thought to assist in the transfer of the ammonia molecule from PurQ to PurL. The sequence is that of Phosphoribosylformylglycinamidine synthase subunit PurQ from Ligilactobacillus salivarius (strain UCC118) (Lactobacillus salivarius).